Here is a 424-residue protein sequence, read N- to C-terminus: 26S proteasome regulatory subunit 6A homolog A (424 aa).

The tract at residues 1 to 21 (MATPMVEDTSSFEEDQLASMS) is disordered. Ala-2 is modified (N-acetylalanine). Ser-19 carries the post-translational modification Phosphoserine. 212 to 219 (GPPGTGKT) is a binding site for ATP. Lys-235 is covalently cross-linked (Glycyl lysine isopeptide (Lys-Gly) (interchain with G-Cter in ubiquitin)). At Thr-278 the chain carries O-acetylthreonine. Residues Lys-279 and Lys-416 each participate in a glycyl lysine isopeptide (Lys-Gly) (interchain with G-Cter in ubiquitin) cross-link.

This sequence belongs to the AAA ATPase family. In terms of assembly, component of the 19S regulatory particle (RP/PA700) base subcomplex of the 26S proteasome. The 26S proteasome is composed of a core protease (CP), known as the 20S proteasome, capped at one or both ends by the 19S regulatory particle (RP/PA700). The RP/PA700 complex is composed of at least 17 different subunits in two subcomplexes, the base and the lid, which form the portions proximal and distal to the 20S proteolytic core, respectively. As to expression, ubiquitous.

It localises to the cytoplasm. The protein localises to the nucleus. Functionally, the 26S proteasome is involved in the ATP-dependent degradation of ubiquitinated proteins. The regulatory (or ATPase) complex confers ATP dependency and substrate specificity to the 26S complex. Interacts with transit peptides of proteins targeted to the chloroplast, and may be involved in the degradation of unimported plastid protein precursors. Plays a essential role in the gametophyte development. Involved in tolerance to zinc deficiency, possibly through alleviation of oxidative stresses or processing of poly-ubiquitinated proteins. This chain is 26S proteasome regulatory subunit 6A homolog A, found in Arabidopsis thaliana (Mouse-ear cress).